Here is a 357-residue protein sequence, read N- to C-terminus: Chorismate synthase (357 aa).

NADP(+) is bound at residue Arg47. Residues 123-125, Gly281, 296-300, and Arg324 each bind FMN; these read RAS and KPTSS.

Belongs to the chorismate synthase family. As to quaternary structure, homotetramer. Requires FMNH2 as cofactor.

It carries out the reaction 5-O-(1-carboxyvinyl)-3-phosphoshikimate = chorismate + phosphate. It participates in metabolic intermediate biosynthesis; chorismate biosynthesis; chorismate from D-erythrose 4-phosphate and phosphoenolpyruvate: step 7/7. Functionally, catalyzes the anti-1,4-elimination of the C-3 phosphate and the C-6 proR hydrogen from 5-enolpyruvylshikimate-3-phosphate (EPSP) to yield chorismate, which is the branch point compound that serves as the starting substrate for the three terminal pathways of aromatic amino acid biosynthesis. This reaction introduces a second double bond into the aromatic ring system. This is Chorismate synthase from Chlamydia trachomatis serovar D (strain ATCC VR-885 / DSM 19411 / UW-3/Cx).